The following is a 165-amino-acid chain: Large ribosomal subunit protein uL10 (165 aa).

This sequence belongs to the universal ribosomal protein uL10 family. As to quaternary structure, part of the ribosomal stalk of the 50S ribosomal subunit. The N-terminus interacts with L11 and the large rRNA to form the base of the stalk. The C-terminus forms an elongated spine to which L12 dimers bind in a sequential fashion forming a multimeric L10(L12)X complex.

In terms of biological role, forms part of the ribosomal stalk, playing a central role in the interaction of the ribosome with GTP-bound translation factors. This Shewanella piezotolerans (strain WP3 / JCM 13877) protein is Large ribosomal subunit protein uL10.